Here is a 66-residue protein sequence, read N- to C-terminus: Large ribosomal subunit protein bL35 (66 aa).

This sequence belongs to the bacterial ribosomal protein bL35 family. As to quaternary structure, part of the 50S ribosomal subunit. Contacts proteins L15 and L33.

In terms of biological role, binds the 23S rRNA. The chain is Large ribosomal subunit protein bL35 (rpmI) from Deinococcus radiodurans (strain ATCC 13939 / DSM 20539 / JCM 16871 / CCUG 27074 / LMG 4051 / NBRC 15346 / NCIMB 9279 / VKM B-1422 / R1).